Here is a 298-residue protein sequence, read N- to C-terminus: Phosphatidylserine decarboxylase proenzyme (298 aa).

Catalysis depends on charge relay system; for autoendoproteolytic cleavage activity residues Asp-113, His-169, and Ser-256. The active-site Schiff-base intermediate with substrate; via pyruvic acid; for decarboxylase activity is the Ser-256. Position 256 is a pyruvic acid (Ser); by autocatalysis (Ser-256).

Belongs to the phosphatidylserine decarboxylase family. PSD-B subfamily. Prokaryotic type II sub-subfamily. Heterodimer of a large membrane-associated beta subunit and a small pyruvoyl-containing alpha subunit. Requires pyruvate as cofactor. Post-translationally, is synthesized initially as an inactive proenzyme. Formation of the active enzyme involves a self-maturation process in which the active site pyruvoyl group is generated from an internal serine residue via an autocatalytic post-translational modification. Two non-identical subunits are generated from the proenzyme in this reaction, and the pyruvate is formed at the N-terminus of the alpha chain, which is derived from the carboxyl end of the proenzyme. The autoendoproteolytic cleavage occurs by a canonical serine protease mechanism, in which the side chain hydroxyl group of the serine supplies its oxygen atom to form the C-terminus of the beta chain, while the remainder of the serine residue undergoes an oxidative deamination to produce ammonia and the pyruvoyl prosthetic group on the alpha chain. During this reaction, the Ser that is part of the protease active site of the proenzyme becomes the pyruvoyl prosthetic group, which constitutes an essential element of the active site of the mature decarboxylase.

It localises to the cell membrane. The catalysed reaction is a 1,2-diacyl-sn-glycero-3-phospho-L-serine + H(+) = a 1,2-diacyl-sn-glycero-3-phosphoethanolamine + CO2. The protein operates within phospholipid metabolism; phosphatidylethanolamine biosynthesis; phosphatidylethanolamine from CDP-diacylglycerol: step 2/2. Its function is as follows. Catalyzes the formation of phosphatidylethanolamine (PtdEtn) from phosphatidylserine (PtdSer). This Desulfitobacterium hafniense (strain DSM 10664 / DCB-2) protein is Phosphatidylserine decarboxylase proenzyme.